Consider the following 88-residue polypeptide: Apolipoprotein C-I (88 aa).

Positions Met-1–Ala-26 are cleaved as a signal peptide.

Belongs to the apolipoprotein C1 family.

The protein localises to the secreted. Functionally, inhibitor of lipoprotein binding to the low density lipoprotein (LDL) receptor, LDL receptor-related protein, and very low density lipoprotein (VLDL) receptor. Associates with high density lipoproteins (HDL) and the triacylglycerol-rich lipoproteins in the plasma and makes up about 10% of the protein of the VLDL and 2% of that of HDL. Appears to interfere directly with fatty acid uptake and is also the major plasma inhibitor of cholesteryl ester transfer protein (CETP). Binds free fatty acids and reduces their intracellular esterification. Modulates the interaction of APOE with beta-migrating VLDL and inhibits binding of beta-VLDL to the LDL receptor-related protein. This is Apolipoprotein C-I (APOC1) from Leptonychotes weddellii (Weddell seal).